The primary structure comprises 303 residues: Cobalamin biosynthesis protein CobD (303 aa).

The next 4 membrane-spanning stretches (helical) occupy residues 65–85, 147–167, 235–255, and 283–303; these read LLAW…IVLL, DAVF…VVLY, AGPV…GAAI, and LVWA…WLYA.

Belongs to the CobD/CbiB family.

It is found in the cell membrane. It participates in cofactor biosynthesis; adenosylcobalamin biosynthesis. Converts cobyric acid to cobinamide by the addition of aminopropanol on the F carboxylic group. In Stutzerimonas stutzeri (strain A1501) (Pseudomonas stutzeri), this protein is Cobalamin biosynthesis protein CobD.